A 1072-amino-acid chain; its full sequence is MLGDEKEGTSAIPGFNQIQFEGFYRFIDQGLIEELAKFPKIEDIDHEIEFQLFVETYQLVEPLIKERDAVYESLTYSSELYVSAGLIWKTSRNMQEQRIFIGNIPLMNSLGTSIVNGIYRIVINQILQSPGIYYQSELDHNGISVYTGTIISDWGGRLELEIDKKARIWARVSRKQKISILVLSSAMGLNLREILENVCYPEIFLSFLTDKEKKKIGSKENAILEFYQQFSCVGGDPIFSESLCKELQKKFFHQRCELGRIGRRNINWRLNLNIPQNNIFLLPRDVLAAADHLIGMKFGMGTLDDMNHLKNKRIRSVADLLQDQLGLALARLENVVKGTISGAIRHKLIPTPQNLVTSTPLTTTYESFFGLHPLSQVLDRTNPLTQIVHGRKLSYLGPGGLTGRTANFRIRDIHPSHYGRICPIDTSEGINVGLIGSLSIHARIGDWGSLESPFYELFEKSKKARIRMLFLSPSQDEYYMIAAGNSLALNRGIQEEQAVPARYRQEFLTIAWEEVHLRSIFPFQYFSIGASLIPFIEHNDANRALMSSNMQRQAVPLSRSEKCIVGTGLERQVALDSGVPAIAEHEGKILYTDTEKIVFSGNGDTLSIPLIMYQRSNKNTCMHQKPQVRRGKCIKKGQILADGAATVGGELALGKNILVAYMPWEGYNFEDAVLISECLVYGDIYTSFHIRKYEIQTHVTTQGPERITKEIPHLEGRLLRNLDKNGIVMLGSWVETGDILVGKLTPQVAKESSYAPEDRLLRAILGIQVSTSKETCLKLPIGGRGRVIDVRWVQKKGGSSYNPEIIRVYISQKREIKVGDKVAGRHGNKGIISKILPRQDMPYLQDGRPVDMVFNPLGVPSRMNVGQIFECSLGLAGSLLDRHYRIAPFDERYEQEASRKLVFSELYEASKQTANPWVFEPEYPGKSRIFDGRTGDPFEQPVIIGKPYILKLIHQVDDKIHGRSSGHYALVTQQPLRGRSKQGGQRVGEMEVWALEGFGVAHILQEMLTYKSDHIRARQEVLGTTIIGGTIPKPEDAPESFRLLVRELRSLALELNHFLVSEKNFQINRKEV.

It belongs to the RNA polymerase beta chain family. In plastids the minimal PEP RNA polymerase catalytic core is composed of four subunits: alpha, beta, beta', and beta''. When a (nuclear-encoded) sigma factor is associated with the core the holoenzyme is formed, which can initiate transcription.

The protein localises to the plastid. The protein resides in the chloroplast. The catalysed reaction is RNA(n) + a ribonucleoside 5'-triphosphate = RNA(n+1) + diphosphate. DNA-dependent RNA polymerase catalyzes the transcription of DNA into RNA using the four ribonucleoside triphosphates as substrates. The protein is DNA-directed RNA polymerase subunit beta of Arabidopsis thaliana (Mouse-ear cress).